The chain runs to 726 residues: Beta-glucosidase cel3A (726 aa).

A signal peptide spans 1–20; that stretch reads MASRLVAGLQVLALAGTATA. 2 N-linked (GlcNAc...) asparagine glycosylation sites follow: Asn-223 and Asn-592.

It belongs to the glycosyl hydrolase 3 family.

The protein resides in the secreted. The enzyme catalyses Hydrolysis of terminal, non-reducing beta-D-glucosyl residues with release of beta-D-glucose.. It functions in the pathway glycan metabolism; cellulose degradation. Beta-glucosidases are one of a number of cellulolytic enzymes involved in the degradation of cellulosic biomass. Catalyzes the last step releasing glucose from the inhibitory cellobiose. Has a broad substrate specificity but preferentially hydrolyzes highly polymerized 1,3- and 1,4-beta-glucans. This Pyricularia oryzae (strain 70-15 / ATCC MYA-4617 / FGSC 8958) (Rice blast fungus) protein is Beta-glucosidase cel3A.